A 331-amino-acid polypeptide reads, in one-letter code: E3 ubiquitin-protein ligase Siah2 (331 aa).

The tract at residues 1-26 (MSRPSSAGGAAGGLGAGKAGGSKHGG) is disordered. Residues 9–26 (GAAGGLGAGKAGGSKHGG) are compositionally biased toward gly residues. The RING-type zinc-finger motif lies at 89-124 (CPVCFDYVLPPILQCQAGHLVCNQCRQKLSCCPTCR). The tract at residues 139-331 (VASTLPFPCK…LGINVTISMC (193 aa)) is SBD. The SIAH-type zinc-finger motif lies at 142-202 (TLPFPCKYSS…VMPHLMHAHK (61 aa)). Cysteine 147, cysteine 154, histidine 166, cysteine 170, cysteine 177, cysteine 184, histidine 196, and histidine 201 together coordinate Zn(2+).

Belongs to the SINA (Seven in absentia) family. In terms of assembly, homodimer. As to expression, in embryos it is expressed in all blastomeres starting at the mid-blastulla. After 20 somite stage, it is expressed mainly in the posterior part. Expressed in brain, including the eye, the cranial cavity, otic vesicle, optic chiasm and in the gut.

It carries out the reaction S-ubiquitinyl-[E2 ubiquitin-conjugating enzyme]-L-cysteine + [acceptor protein]-L-lysine = [E2 ubiquitin-conjugating enzyme]-L-cysteine + N(6)-ubiquitinyl-[acceptor protein]-L-lysine.. It functions in the pathway protein modification; protein ubiquitination. In terms of biological role, E3 ubiquitin-protein ligase that mediates ubiquitination and subsequent proteasomal degradation of target proteins. E3 ubiquitin ligases accept ubiquitin from an E2 ubiquitin-conjugating enzyme in the form of a thioester and then directly transfers the ubiquitin to targeted substrates. It probably triggers the ubiquitin-mediated degradation of different substrates. Induces cellular growth arrest by inhibiting the G2/M transition. May play a role in the regulation of the cellular clock function. This is E3 ubiquitin-protein ligase Siah2 (siah2l) from Danio rerio (Zebrafish).